A 66-amino-acid chain; its full sequence is Large ribosomal subunit protein uL29 (66 aa).

Belongs to the universal ribosomal protein uL29 family.

This chain is Large ribosomal subunit protein uL29, found in Rhizobium etli (strain ATCC 51251 / DSM 11541 / JCM 21823 / NBRC 15573 / CFN 42).